Reading from the N-terminus, the 627-residue chain is Pentatricopeptide repeat-containing protein At2g35030, mitochondrial (627 aa).

The N-terminal 44 residues, 1 to 44 (MQSRALSRLRSYYKRSSVFPSSDNDRSVQLFNLVRSIYSSSSRP), are a transit peptide targeting the mitochondrion. PPR repeat units lie at residues 45-75 (RVPQ…LPER), 76-110 (DVVT…KNVV), 111-138 (TWTA…MPER), 139-173 (NVVS…NIVS), 174-200 (WNSM…MPRR), 201-235 (DVVS…NIIS), 236-262 (WNAM…MPER), 263-293 (DFAS…MPEK), 294-328 (NVIS…GSVK), 330-360 (NVGT…ISKS), 365-396 (NEIV…LVCQ), 398-432 (DLIS…GFKP), 433-467 (SAVT…ESLP), and 469-499 (REEH…DDAR). The type E motif stretch occupies residues 504–579 (FYGAILSACN…QPGCSWVKVG (76 aa)). The tract at residues 580–610 (KQNHLFVVGDKSHPQFEALDSILSDLRNKMR) is type E(+) motif.

Belongs to the PPR family. PCMP-E subfamily.

Its subcellular location is the mitochondrion. In Arabidopsis thaliana (Mouse-ear cress), this protein is Pentatricopeptide repeat-containing protein At2g35030, mitochondrial (PCMP-E15).